A 68-amino-acid polypeptide reads, in one-letter code: Phosphatidylinositol N-acetylglucosaminyltransferase ERI1 subunit (68 aa).

Helical transmembrane passes span F8–L28 and F34–I54.

As to quaternary structure, component of the phosphatidylinositol N-acetylglucosaminyltransferase (GPI-GlcNAc transferase) complex composed of at least GPI1, GPI2, GPI3, GPI15, GPI19 and ERI1. Interacts with GPI2. Interacts with GTP-bound RAS2 in an effector loop-dependent manner.

It is found in the endoplasmic reticulum membrane. Its pathway is glycolipid biosynthesis; glycosylphosphatidylinositol-anchor biosynthesis. Functionally, probable component of the GPI-GlcNAc transferase (GPI-GnT) complex in the endoplasmic reticulum, a complex that catalyzes transfer of GlcNAc from UDP-GlcNAc to an acceptor phosphatidylinositol, the first step in the production of GPI-anchors for cell surface proteins. Ras may inhibit the enzyme activity of the GPI-GnT complex via the association between ERI1 and RAS2. In Saccharomyces cerevisiae (strain ATCC 204508 / S288c) (Baker's yeast), this protein is Phosphatidylinositol N-acetylglucosaminyltransferase ERI1 subunit (ERI1).